We begin with the raw amino-acid sequence, 361 residues long: Histidinol-phosphate aminotransferase (361 aa).

Lysine 224 bears the N6-(pyridoxal phosphate)lysine mark.

It belongs to the class-II pyridoxal-phosphate-dependent aminotransferase family. Histidinol-phosphate aminotransferase subfamily. In terms of assembly, homodimer. Pyridoxal 5'-phosphate serves as cofactor.

It catalyses the reaction L-histidinol phosphate + 2-oxoglutarate = 3-(imidazol-4-yl)-2-oxopropyl phosphate + L-glutamate. The protein operates within amino-acid biosynthesis; L-histidine biosynthesis; L-histidine from 5-phospho-alpha-D-ribose 1-diphosphate: step 7/9. The protein is Histidinol-phosphate aminotransferase of Limosilactobacillus fermentum (strain NBRC 3956 / LMG 18251) (Lactobacillus fermentum).